The primary structure comprises 389 residues: Alanine racemase (389 aa).

The Proton acceptor; specific for D-alanine role is filled by K48. At K48 the chain carries N6-(pyridoxal phosphate)lysine. Residue R144 coordinates substrate. Residue Y281 is the Proton acceptor; specific for L-alanine of the active site. Residue M329 coordinates substrate.

It belongs to the alanine racemase family. Pyridoxal 5'-phosphate serves as cofactor.

The catalysed reaction is L-alanine = D-alanine. Its pathway is amino-acid biosynthesis; D-alanine biosynthesis; D-alanine from L-alanine: step 1/1. In terms of biological role, catalyzes the interconversion of L-alanine and D-alanine. May also act on other amino acids. The protein is Alanine racemase (alr) of Leptospira interrogans serogroup Icterohaemorrhagiae serovar Lai (strain 56601).